Consider the following 284-residue polypeptide: Nucleotide-binding protein NMB0738 (284 aa).

8-15 is an ATP binding site; the sequence is GLSGSGKS. A GTP-binding site is contributed by 58-61; that stretch reads DVRS.

The protein belongs to the RapZ-like family.

Its function is as follows. Displays ATPase and GTPase activities. This Neisseria meningitidis serogroup B (strain ATCC BAA-335 / MC58) protein is Nucleotide-binding protein NMB0738.